The sequence spans 177 residues: CDP-diacylglycerol--serine O-phosphatidyltransferase (177 aa).

5 helical membrane passes run 4 to 24, 28 to 48, 77 to 97, 116 to 136, and 140 to 160; these read IPCM…HSLL, IHSA…DGMA, MLAY…CALT, LPTF…ILSF, and PILL…KIKF.

It belongs to the CDP-alcohol phosphatidyltransferase class-I family.

It is found in the cell membrane. The catalysed reaction is a CDP-1,2-diacyl-sn-glycerol + L-serine = a 1,2-diacyl-sn-glycero-3-phospho-L-serine + CMP + H(+). The polypeptide is CDP-diacylglycerol--serine O-phosphatidyltransferase (pssA) (Bacillus subtilis (strain 168)).